We begin with the raw amino-acid sequence, 308 residues long: Porphobilinogen deaminase (308 aa).

Cys-241 is subject to S-(dipyrrolylmethanemethyl)cysteine.

Belongs to the HMBS family. In terms of assembly, monomer. Dipyrromethane is required as a cofactor.

The enzyme catalyses 4 porphobilinogen + H2O = hydroxymethylbilane + 4 NH4(+). Its pathway is porphyrin-containing compound metabolism; protoporphyrin-IX biosynthesis; coproporphyrinogen-III from 5-aminolevulinate: step 2/4. In terms of biological role, tetrapolymerization of the monopyrrole PBG into the hydroxymethylbilane pre-uroporphyrinogen in several discrete steps. This Staphylococcus aureus (strain MSSA476) protein is Porphobilinogen deaminase.